Here is a 222-residue protein sequence, read N- to C-terminus: Charged multivesicular body protein 3 (222 aa).

Gly-2 carries N-myristoyl glycine lipidation. The interval 2-113 (GLFGKTQEKP…LQKSTEVMKA (112 aa)) is intramolecular interaction with C-terminus. Positions 22–54 (KIRKEMRVVDRQIRDIQREEEKVKRSVKDAAKK) form a coiled coil. Important for autoinhibitory function stretches follow at residues 59-64 (VCVVLA) and 168-169 (IL). Residues 149–222 (ESMDDQEEME…MQSRLATLRS (74 aa)) adopt a coiled-coil conformation. Positions 151-220 (MDDQEEMEEA…EAMQSRLATL (70 aa)) are intramolecular interaction with N-terminus. Residues 151 to 222 (MDDQEEMEEA…MQSRLATLRS (72 aa)) form an interaction with VPS4A region. A Glycyl lysine isopeptide (Lys-Gly) (interchain with G-Cter in ubiquitin) cross-link involves residue Lys-179. The disordered stretch occupies residues 180-222 (APSKVTDALPEPEPSGAMAASDEEEEEEEALEAMQSRLATLRS). Interaction with STAMBP regions lie at residues 196 to 222 (AMAA…TLRS), 203 to 207 (EEEEE), and 221 to 222 (RS). The residue at position 200 (Ser-200) is a Phosphoserine. Acidic residues predominate over residues 200–210 (SDEEEEEEEAL). An MIT-interacting motif motif is present at residues 201–211 (DEEEEEEEALE).

It belongs to the SNF7 family. Probable core component of the endosomal sorting required for transport complex III (ESCRT-III). ESCRT-III components are thought to multimerize to form a flat lattice on the perimeter membrane of the endosome. Several assembly forms of ESCRT-III may exist that interact and act sequentially. Forms a metastable monomer in solution; its core structure (without part of the putative autoinhibitory C-terminal acidic region) oligomerizes into a flat lattice via two different dimerization interfaces. In vitro, heteromerizes with CHMP2A (but not CHMP4) to form helical tubular structures that expose membrane-interacting sites on the outside whereas VPS4B can associate on the inside of the tubule. May interact with IGFBP7; the relevance of such interaction however remains unclear. Interacts with CHMP2A. Interacts with CHMP4A; the interaction requires the release of CHMP4A autoinhibition. Interacts with VPS4A. Interacts with STAMBP; the interaction appears to relieve the autoinhibition of CHMP3. Interacts with VTA1.

The protein localises to the cytoplasm. The protein resides in the cytosol. It is found in the membrane. Its subcellular location is the endosome. It localises to the late endosome membrane. Its function is as follows. Probable core component of the endosomal sorting required for transport complex III (ESCRT-III) which is involved in multivesicular bodies (MVBs) formation and sorting of endosomal cargo proteins into MVBs. MVBs contain intraluminal vesicles (ILVs) that are generated by invagination and scission from the limiting membrane of the endosome and mostly are delivered to lysosomes enabling degradation of membrane proteins, such as stimulated growth factor receptors, lysosomal enzymes and lipids. The MVB pathway appears to require the sequential function of ESCRT-O, -I,-II and -III complexes. ESCRT-III proteins mostly dissociate from the invaginating membrane before the ILV is released. The ESCRT machinery also functions in topologically equivalent membrane fission events, such as the terminal stages of cytokinesis and the budding of enveloped viruses (lentiviruses). ESCRT-III proteins are believed to mediate the necessary vesicle extrusion and/or membrane fission activities, possibly in conjunction with the AAA ATPase VPS4. Selectively binds to phosphatidylinositol 3,5-bisphosphate PtdIns(3,5)P2 and PtdIns(3,4)P2 in preference to other phosphoinositides tested. Involved in late stages of cytokinesis. Plays a role in endosomal sorting/trafficking of EGF receptor. The polypeptide is Charged multivesicular body protein 3 (CHMP3) (Macaca fascicularis (Crab-eating macaque)).